We begin with the raw amino-acid sequence, 218 residues long: 25.3 kDa vesicle transport protein SEC22-1 (218 aa).

Over 1 to 192 the chain is Cytoplasmic; sequence MVKMTLIARV…DKAKDLNRQA (192 aa). The Longin domain maps to 6 to 120; sequence LIARVTDGLP…YAFIKFDTFI (115 aa). One can recognise a v-SNARE coiled-coil homology domain in the interval 135–195; that stretch reads NIAKLNDELY…KDLNRQALIR (61 aa). The chain crosses the membrane as a helical; Anchor for type IV membrane protein span at residues 193 to 213; the sequence is LIRKWAPVAIVFGVVFLLFWV. The Vesicular portion of the chain corresponds to 214–218; that stretch reads KNKLW.

This sequence belongs to the synaptobrevin family. In terms of assembly, interacts with SEC24A. As to expression, mainly expressed in flowers and siliques, to a lower extent in seedlings, and barely in roots and leaves.

It localises to the golgi apparatus membrane. It is found in the endoplasmic reticulum membrane. V-SNARE involved in vesicle trafficking from the ER to the Golgi complex and required for early secretion. Involved in endoplasmic reticulum (ER) biogenesis and functions as well as for Golgi-stack integrity. Essential for gametophytes development. Involved in cesium Cs(+) accumulation, a non-essential cation. This is 25.3 kDa vesicle transport protein SEC22-1 from Arabidopsis thaliana (Mouse-ear cress).